A 737-amino-acid chain; its full sequence is ARMADILLO BTB ARABIDOPSIS PROTEIN 1 (737 aa).

ARM repeat units lie at residues 112 to 154 (DENV…KDCA), 165 to 212 (PGYQ…NIAH), 215 to 254 (PRIK…TVSF), 257 to 296 (DENK…NLVH), 299 to 338 (PDIK…QFAA), 341 to 380 (SDCK…RLAQ), 382 to 421 (AHNQ…GLAD), 456 to 495 (LKRL…HLCD), and 497 to 536 (KDGK…ELAK). The BTB domain maps to 568–635 (SDVTFLIDGK…IYSGRINIAK (68 aa)).

Forms a heterodimeric complex with TCP24. Interacts with the origin recognition complex (preRC) components ORC1A, ORC1B, CDT1A and CDT1B. Interacts with DUF7/AIP1. Weakly expressed in the emerging lateral roots and mainly expressed in the shoot apex, young leaves and flower buds.

The protein resides in the nucleus. The protein operates within protein modification; protein ubiquitination. May act as a substrate-specific adapter of an E3 ubiquitin-protein ligase complex (CUL3-RBX1-BTB) which mediates the ubiquitination and subsequent proteasomal degradation of target proteins. In association with TCP24, exerts a negative role in cell proliferation in leaves, possibly by inhibiting mitotic DNA replication. The polypeptide is ARMADILLO BTB ARABIDOPSIS PROTEIN 1 (ABAP1) (Arabidopsis thaliana (Mouse-ear cress)).